A 475-amino-acid chain; its full sequence is UDP-N-acetylmuramate--L-alanine ligase (475 aa).

Residue 125 to 131 (GTHGKTT) coordinates ATP.

Belongs to the MurCDEF family.

Its subcellular location is the cytoplasm. It catalyses the reaction UDP-N-acetyl-alpha-D-muramate + L-alanine + ATP = UDP-N-acetyl-alpha-D-muramoyl-L-alanine + ADP + phosphate + H(+). It participates in cell wall biogenesis; peptidoglycan biosynthesis. Functionally, cell wall formation. This is UDP-N-acetylmuramate--L-alanine ligase from Actinobacillus pleuropneumoniae serotype 5b (strain L20).